The following is a 235-amino-acid chain: H2HPP isomerase (235 aa).

2 consecutive Cupin type-2 domains span residues 41–106 (VPPH…AIDI) and 151–216 (KIPG…KSIN). Residues H50, H52, Q56, H91, H162, H164, Q168, and H202 each contribute to the a divalent metal cation site. Substrate is bound at residue Y223.

In terms of assembly, monomer. It depends on Fe(2+) as a cofactor. The cofactor is Co(2+).

The protein localises to the cytoplasm. The enzyme catalyses 3-[(4R)-4-hydroxycyclohexa-1,5-dien-1-yl]-2-oxopropanoate = 3-[(1E,4R)-4-hydroxycyclohex-2-en-1-ylidene]pyruvate. It participates in antibiotic biosynthesis; bacilysin biosynthesis. Its function is as follows. Part of the bacABCDEF operon responsible for the biosynthesis of the nonribosomally synthesized dipeptide antibiotic bacilysin, composed of L-alanine and L-anticapsin. Bacilysin is an irreversible inactivator of the glutaminase domain of glucosamine synthetase. BacB catalyzes the allylic isomerization of the endocyclic-delta(4),delta(8)-7R-dihydro-hydroxyphenylpyruvate (en-H2HPP) to generate a mixture of 3E,7R- and 3Z, 7R-olefins (E/Z ration of 3/1) of the exocyclic-delta(3),delta(5)-dihydro-hydroxyphenylpyruvate (ex-H2HPP). This Bacillus subtilis (strain 168) protein is H2HPP isomerase.